The sequence spans 206 residues: Small ribosomal subunit protein uS4 (206 aa).

An S4 RNA-binding domain is found at 96–156; sequence TRLDNVVYRM…EKSRTQARIK (61 aa).

This sequence belongs to the universal ribosomal protein uS4 family. Part of the 30S ribosomal subunit. Contacts protein S5. The interaction surface between S4 and S5 is involved in control of translational fidelity.

One of the primary rRNA binding proteins, it binds directly to 16S rRNA where it nucleates assembly of the body of the 30S subunit. In terms of biological role, with S5 and S12 plays an important role in translational accuracy. The chain is Small ribosomal subunit protein uS4 from Shewanella halifaxensis (strain HAW-EB4).